The chain runs to 380 residues: Cytochrome b (380 aa).

The next 4 membrane-spanning stretches (helical) occupy residues 33–53, 77–98, 113–133, and 178–198; these read FGSL…FLAM, WTIR…FLHI, WNIG…GYVL, and FFTF…LHLL. Heme b-binding residues include His83 and His97. Positions 182 and 196 each coordinate heme b. His201 is an a ubiquinone binding site. The next 4 membrane-spanning stretches (helical) occupy residues 226-246, 288-308, 320-340, and 347-367; these read IKDI…TLFS, LGGV…PILH, LSQL…WIGG, and FITI…FLMP.

Belongs to the cytochrome b family. The cytochrome bc1 complex contains 11 subunits: 3 respiratory subunits (MT-CYB, CYC1 and UQCRFS1), 2 core proteins (UQCRC1 and UQCRC2) and 6 low-molecular weight proteins (UQCRH/QCR6, UQCRB/QCR7, UQCRQ/QCR8, UQCR10/QCR9, UQCR11/QCR10 and a cleavage product of UQCRFS1). This cytochrome bc1 complex then forms a dimer. The cofactor is heme b.

Its subcellular location is the mitochondrion inner membrane. In terms of biological role, component of the ubiquinol-cytochrome c reductase complex (complex III or cytochrome b-c1 complex) that is part of the mitochondrial respiratory chain. The b-c1 complex mediates electron transfer from ubiquinol to cytochrome c. Contributes to the generation of a proton gradient across the mitochondrial membrane that is then used for ATP synthesis. This is Cytochrome b (MT-CYB) from Gorilla gorilla gorilla (Western lowland gorilla).